We begin with the raw amino-acid sequence, 194 residues long: Phosphoheptose isomerase (194 aa).

Residues 37 to 194 form the SIS domain; sequence ISNSFKQGGK…LIEFEMAKQA (158 aa). 52–54 contributes to the substrate binding site; that stretch reads NGG. Zn(2+) contacts are provided by His-61 and Glu-65. Residues Glu-65, 93–94, 119–121, Ser-124, and Gln-172 each bind substrate; these read ND and STS. The Zn(2+) site is built by Gln-172 and His-180.

The protein belongs to the SIS family. GmhA subfamily. In terms of assembly, homotetramer. Zn(2+) is required as a cofactor.

It is found in the cytoplasm. It catalyses the reaction 2 D-sedoheptulose 7-phosphate = D-glycero-alpha-D-manno-heptose 7-phosphate + D-glycero-beta-D-manno-heptose 7-phosphate. It participates in carbohydrate biosynthesis; D-glycero-D-manno-heptose 7-phosphate biosynthesis; D-glycero-alpha-D-manno-heptose 7-phosphate and D-glycero-beta-D-manno-heptose 7-phosphate from sedoheptulose 7-phosphate: step 1/1. In terms of biological role, catalyzes the isomerization of sedoheptulose 7-phosphate in D-glycero-D-manno-heptose 7-phosphate. This Haemophilus influenzae (strain PittEE) protein is Phosphoheptose isomerase.